The following is a 100-amino-acid chain: RING finger protein Z (100 aa).

A lipid anchor (N-myristoyl glycine; by host) is attached at G2. The RING-type; atypical zinc finger occupies 43–79 (CRCCWFANTNLIKCSDHYICLKCLNIMLGKSSFCDIC). The short motif at 93 to 96 (PSAP) is the PTAP/PSAP motif element.

This sequence belongs to the arenaviridae Z protein family. As to quaternary structure, interacts with protein NP; this interaction probably directs the encapsidated genome to budding sites. Interacts (via RING domain) with polymerase L; this interaction inhibits viral transcription and replication, Z partially blocks the product exit tunnel for the releasing nascent RNA product. Interacts with the glycoprotein complex; this interaction plays a role in virion budding. Interacts with host eIF4E; this interaction results in eIF4E reduced affinity for its substrate, the 5'-m7 G cap structure. Interacts (via late-budding domain) with host TSG101; this interaction is essential for budding and release of viral particles. Interacts with host RPLP0; this interaction may serve to load ribosome-like particles inside the virion. Interacts with host PML; this interaction induces PML bodies redistribution in the cytoplasm upon viral infection. Post-translationally, myristoylation is required for the role of RING finger protein Z in assembly and budding.

It localises to the virion. The protein localises to the host cytoplasm. The protein resides in the host perinuclear region. Its subcellular location is the host cell membrane. Its function is as follows. Plays a crucial role in virion assembly and budding. Expressed late in the virus life cycle, it acts as an inhibitor of viral transcription and RNA synthesis by interacting with the viral polymerase L. Presumably recruits the NP encapsidated genome to cellular membranes at budding sites via direct interaction with NP. Plays critical roles in the final steps of viral release by interacting with host TSG101, a member of the vacuolar protein-sorting pathway and using other cellular host proteins involved in vesicle formation pathway. The budding of the virus progeny occurs after association of protein Z with the viral glycoprotein complex SSP-GP1-GP2 at the cell periphery, step that requires myristoylation of protein Z. Also selectively represses protein production by associating with host eIF4E. In cell-based minigenome assay, has an inhibitory effect on the ribonucleoprotein machinery (vRNP), which is responsible for the replication and transcription of the viral genome. This chain is RING finger protein Z, found in Homo sapiens (Human).